A 495-amino-acid chain; its full sequence is ATP synthase subunit beta, chloroplastic (495 aa).

G172–T179 contacts ATP.

This sequence belongs to the ATPase alpha/beta chains family. As to quaternary structure, F-type ATPases have 2 components, CF(1) - the catalytic core - and CF(0) - the membrane proton channel. CF(1) has five subunits: alpha(3), beta(3), gamma(1), delta(1), epsilon(1). CF(0) has four main subunits: a(1), b(1), b'(1) and c(9-12).

The protein localises to the plastid. Its subcellular location is the chloroplast thylakoid membrane. It catalyses the reaction ATP + H2O + 4 H(+)(in) = ADP + phosphate + 5 H(+)(out). Produces ATP from ADP in the presence of a proton gradient across the membrane. The catalytic sites are hosted primarily by the beta subunits. This is ATP synthase subunit beta, chloroplastic from Barnardia japonica (Chinese squill).